Consider the following 600-residue polypeptide: ATP-dependent lipid A-core flippase (600 aa).

4 helical membrane-spanning segments follow: residues 27–47 (ISLF…QPML), 83–103 (LLII…NYFL), 174–194 (LLFM…LIAV), and 267–287 (PLLQ…VLYL). The region spanning 31–322 (LISIVGFLIF…LSEVSSTIQK (292 aa)) is the ABC transmembrane type-1 domain. Positions 354-590 (LDVRNLSFTY…NGYYARLNAM (237 aa)) constitute an ABC transporter domain. 388–395 (GRSGSGKS) is an ATP binding site.

Belongs to the ABC transporter superfamily. Lipid exporter (TC 3.A.1.106) family. In terms of assembly, homodimer.

The protein localises to the cell inner membrane. It catalyses the reaction ATP + H2O + lipid A-core oligosaccharideSide 1 = ADP + phosphate + lipid A-core oligosaccharideSide 2.. Functionally, involved in lipopolysaccharide (LPS) biosynthesis. Translocates lipid A-core from the inner to the outer leaflet of the inner membrane. Transmembrane domains (TMD) form a pore in the inner membrane and the ATP-binding domain (NBD) is responsible for energy generation. In Pseudomonas fluorescens (strain Pf0-1), this protein is ATP-dependent lipid A-core flippase.